A 135-amino-acid polypeptide reads, in one-letter code: U-scoloptoxin(22)-Er1a (135 aa).

The first 24 residues, 1–24, serve as a signal peptide directing secretion; that stretch reads MAVILKHLAIILLVFVIEIKMGQG. Residues 61–135 are disordered; that stretch reads PQITFSTDWG…RSPRYLPTII (75 aa). Positions 75-127 are enriched in basic and acidic residues; it reads SVNEDREAAERERSPQMKRSEHEEQLMAKDEMKRFQEERNPSSDDKIAIDKRS.

This sequence belongs to the scoloptoxin-22 family. In terms of tissue distribution, expressed by the venom gland.

It localises to the secreted. This Ethmostigmus rubripes (Giant centipede) protein is U-scoloptoxin(22)-Er1a.